The following is a 365-amino-acid chain: tRNA/tmRNA (uracil-C(5))-methyltransferase (365 aa).

S-adenosyl-L-methionine is bound by residues glutamine 189, tyrosine 217, asparagine 222, glutamate 238, and aspartate 298. Cysteine 323 serves as the catalytic Nucleophile. The active-site Proton acceptor is glutamate 357.

Belongs to the class I-like SAM-binding methyltransferase superfamily. RNA M5U methyltransferase family. TrmA subfamily.

The catalysed reaction is uridine(54) in tRNA + S-adenosyl-L-methionine = 5-methyluridine(54) in tRNA + S-adenosyl-L-homocysteine + H(+). The enzyme catalyses uridine(341) in tmRNA + S-adenosyl-L-methionine = 5-methyluridine(341) in tmRNA + S-adenosyl-L-homocysteine + H(+). In terms of biological role, dual-specificity methyltransferase that catalyzes the formation of 5-methyluridine at position 54 (m5U54) in all tRNAs, and that of position 341 (m5U341) in tmRNA (transfer-mRNA). This is tRNA/tmRNA (uracil-C(5))-methyltransferase from Saccharophagus degradans (strain 2-40 / ATCC 43961 / DSM 17024).